The chain runs to 456 residues: Putative E3 ubiquitin-protein ligase XBAT31 (456 aa).

ANK repeat units follow at residues 45–74 (DRHSVLHVAAANGQIEILSLLLERFTNPDL), 78–107 (HKQTPLMLAAMYGRISCVKKLAEVGANILM), 112–141 (NRRTCLHYAAYYGHANCVQAILSAAQSSPV), 157–186 (KGATPLHLAARQRRPECVNVLLDSGSLVCA), and 194–224 (PGSTPLHLAARSGSIDCVRKLLAWGADRLQR). The RING-type zinc-finger motif lies at 319 to 368 (CCICFEQVCTIEVKDCGHQMCAQCTLALCCHNKPNPTTSTVTPPVCPFCR).

The enzyme catalyses S-ubiquitinyl-[E2 ubiquitin-conjugating enzyme]-L-cysteine + [acceptor protein]-L-lysine = [E2 ubiquitin-conjugating enzyme]-L-cysteine + N(6)-ubiquitinyl-[acceptor protein]-L-lysine.. Its pathway is protein modification; protein ubiquitination. No E3 ubiquitin-protein ligase activity observed when associated with the E2 enzyme UBC8 in vitro. The polypeptide is Putative E3 ubiquitin-protein ligase XBAT31 (XBAT31) (Arabidopsis thaliana (Mouse-ear cress)).